Reading from the N-terminus, the 92-residue chain is Large ribosomal subunit protein eL43 (92 aa).

The C4-type zinc finger occupies 39 to 60; that stretch reads CSFCGKKAVKRGAAGIWNCSSC.

Belongs to the eukaryotic ribosomal protein eL43 family.

The polypeptide is Large ribosomal subunit protein eL43 (RPL43) (Eremothecium gossypii (strain ATCC 10895 / CBS 109.51 / FGSC 9923 / NRRL Y-1056) (Yeast)).